A 1775-amino-acid polypeptide reads, in one-letter code: ATP-dependent RNA helicase DEAH12, chloroplastic (1775 aa).

The N-terminal 33 residues, 1-33 (MRNSFPPSDGGRSATDRRQQSSHSSSTNRYNSR), are a transit peptide targeting the chloroplast. Residues 1 to 77 (MRNSFPPSDG…NPSSGYSPPV (77 aa)) form a disordered region. Positions 21-34 (SSHSSSTNRYNSRS) are enriched in low complexity. A compositionally biased stretch (polar residues) spans 35–60 (AQSSPPLNHRPTWNQQHSQYPNSNFP). Residues 316-480 (LKKIHREQIM…FFSCGILLVN (165 aa)) enclose the Helicase ATP-binding domain. ATP is bound at residue 329 to 336 (GETGSGKS). The DEAH box motif lies at 427–430 (DEAH). Residues 510–676 (DVVKMAVEIH…VALLRMLALG (167 aa)) enclose the Helicase C-terminal domain. A TRIAD supradomain region spans residues 1560–1767 (IEVECPICLS…EPCYAHLRTI (208 aa)). Zn(2+) is bound by residues Cys1564, Cys1567, Cys1580, His1582, Cys1585, Cys1588, Cys1607, Cys1612, Cys1652, Cys1657, Cys1675, Cys1678, Cys1683, Cys1686, His1691, Cys1696, Cys1722, and Cys1725. The RING-type 1 zinc-finger motif lies at 1564-1612 (CPICLSEVDDGYSLEGCSHLFCKACLLEQFEASMRNFDAFPILCSHIDC). The segment at 1631–1696 (DELFSASLSS…HLEYHPLITC (66 aa)) adopts an IBR-type zinc-finger fold. The segment at 1722 to 1750 (CPICKSTIEKTDGCNHMKCRCGKHICWTC) adopts an RING-type 2; atypical zinc-finger fold. Cys1735 is an active-site residue. 2 residues coordinate Zn(2+): Cys1740 and Cys1742.

Belongs to the DEAD box helicase family. DEAH subfamily.

The protein localises to the plastid. The protein resides in the chloroplast. The catalysed reaction is ATP + H2O = ADP + phosphate + H(+). This chain is ATP-dependent RNA helicase DEAH12, chloroplastic, found in Arabidopsis thaliana (Mouse-ear cress).